Here is a 364-residue protein sequence, read N- to C-terminus: Small ribosomal subunit biogenesis GTPase RsgA (364 aa).

One can recognise a CP-type G domain in the interval K101–L264. Residues N154 to D157 and G206 to T214 contribute to the GTP site. Zn(2+)-binding residues include C288, C293, H295, and C301. Positions Q339 to Q364 are disordered. A compositionally biased stretch (basic residues) spans Q342 to R358.

This sequence belongs to the TRAFAC class YlqF/YawG GTPase family. RsgA subfamily. As to quaternary structure, monomer. Associates with 30S ribosomal subunit, binds 16S rRNA. Zn(2+) is required as a cofactor.

Its subcellular location is the cytoplasm. Functionally, one of several proteins that assist in the late maturation steps of the functional core of the 30S ribosomal subunit. Helps release RbfA from mature subunits. May play a role in the assembly of ribosomal proteins into the subunit. Circularly permuted GTPase that catalyzes slow GTP hydrolysis, GTPase activity is stimulated by the 30S ribosomal subunit. This chain is Small ribosomal subunit biogenesis GTPase RsgA, found in Syntrophotalea carbinolica (strain DSM 2380 / NBRC 103641 / GraBd1) (Pelobacter carbinolicus).